We begin with the raw amino-acid sequence, 226 residues long: Small ribosomal subunit protein uS2c (226 aa).

Belongs to the universal ribosomal protein uS2 family.

It is found in the plastid. It localises to the chloroplast. The protein is Small ribosomal subunit protein uS2c (rps2) of Ostreococcus tauri.